The following is a 406-amino-acid chain: Phosphoglycerate kinase (406 aa).

Substrate contacts are provided by residues 22 to 24 (DLN), Arg37, 60 to 63 (HLGN), Arg119, and Arg152. Residues Lys202, Glu325, and 355 to 358 (GGDT) contribute to the ATP site.

It belongs to the phosphoglycerate kinase family. As to quaternary structure, monomer.

Its subcellular location is the cytoplasm. It carries out the reaction (2R)-3-phosphoglycerate + ATP = (2R)-3-phospho-glyceroyl phosphate + ADP. It participates in carbohydrate degradation; glycolysis; pyruvate from D-glyceraldehyde 3-phosphate: step 2/5. This chain is Phosphoglycerate kinase, found in Orientia tsutsugamushi (strain Ikeda) (Rickettsia tsutsugamushi).